A 365-amino-acid chain; its full sequence is tRNA-specific 2-thiouridylase MnmA (365 aa).

ATP contacts are provided by residues 14-21 (AMSGGVDS) and Leu-40. The active-site Nucleophile is the Cys-108. A disulfide bridge links Cys-108 with Cys-204. ATP is bound at residue Gly-132. An interaction with tRNA region spans residues 154 to 156 (KDQ). The Cysteine persulfide intermediate role is filled by Cys-204.

Belongs to the MnmA/TRMU family.

It localises to the cytoplasm. The catalysed reaction is S-sulfanyl-L-cysteinyl-[protein] + uridine(34) in tRNA + AH2 + ATP = 2-thiouridine(34) in tRNA + L-cysteinyl-[protein] + A + AMP + diphosphate + H(+). In terms of biological role, catalyzes the 2-thiolation of uridine at the wobble position (U34) of tRNA, leading to the formation of s(2)U34. This is tRNA-specific 2-thiouridylase MnmA from Rickettsia felis (strain ATCC VR-1525 / URRWXCal2) (Rickettsia azadi).